A 149-amino-acid polypeptide reads, in one-letter code: Flavodoxin YqcA (149 aa).

Positions 4–145 (IGIFVGTMYG…ESNPWVEQWG (142 aa)) constitute a Flavodoxin-like domain. FMN contacts are provided by residues 10–15 (TMYGNS) and 99–101 (NFC).

Belongs to the flavodoxin family. MioC subfamily. Monomer. It depends on FMN as a cofactor.

Its function is as follows. Probable electron transporter. The polypeptide is Flavodoxin YqcA (yqcA) (Escherichia coli (strain K12)).